The primary structure comprises 128 residues: Ribosome-binding factor A (128 aa).

This sequence belongs to the RbfA family. Monomer. Binds 30S ribosomal subunits, but not 50S ribosomal subunits or 70S ribosomes.

The protein localises to the cytoplasm. In terms of biological role, one of several proteins that assist in the late maturation steps of the functional core of the 30S ribosomal subunit. Associates with free 30S ribosomal subunits (but not with 30S subunits that are part of 70S ribosomes or polysomes). Required for efficient processing of 16S rRNA. May interact with the 5'-terminal helix region of 16S rRNA. This chain is Ribosome-binding factor A, found in Microcystis aeruginosa (strain NIES-843 / IAM M-2473).